Here is a 397-residue protein sequence, read N- to C-terminus: Elongation factor Tu (397 aa).

In terms of domain architecture, tr-type G spans K10–E206. The tract at residues G19 to T26 is G1. Residue G19–T26 coordinates GTP. T26 contributes to the Mg(2+) binding site. Positions G62–S66 are G2. The segment at D83–G86 is G3. GTP contacts are provided by residues D83–H87 and N138–D141. Positions N138–D141 are G4. The interval S176–L178 is G5.

It belongs to the TRAFAC class translation factor GTPase superfamily. Classic translation factor GTPase family. EF-Tu/EF-1A subfamily. As to quaternary structure, monomer.

Its subcellular location is the cytoplasm. The enzyme catalyses GTP + H2O = GDP + phosphate + H(+). In terms of biological role, GTP hydrolase that promotes the GTP-dependent binding of aminoacyl-tRNA to the A-site of ribosomes during protein biosynthesis. This chain is Elongation factor Tu, found in Salinispora tropica (strain ATCC BAA-916 / DSM 44818 / JCM 13857 / NBRC 105044 / CNB-440).